Reading from the N-terminus, the 306-residue chain is Ribokinase (306 aa).

Substrate is bound by residues 12 to 14 (NAD), 40 to 44 (GKGAN), and glutamate 141. ATP is bound by residues asparagine 185 and 221–226 (TLGAKG). K(+) contacts are provided by aspartate 247 and threonine 249. 252–253 (GD) contacts ATP. Aspartate 253 provides a ligand contact to substrate. Residue aspartate 253 is the Proton acceptor of the active site. Residues serine 283, lysine 286, glycine 288, and serine 292 each contribute to the K(+) site.

It belongs to the carbohydrate kinase PfkB family. Ribokinase subfamily. Homodimer. Mg(2+) serves as cofactor.

The protein resides in the cytoplasm. It catalyses the reaction D-ribose + ATP = D-ribose 5-phosphate + ADP + H(+). It functions in the pathway carbohydrate metabolism; D-ribose degradation; D-ribose 5-phosphate from beta-D-ribopyranose: step 2/2. Its activity is regulated as follows. Activated by a monovalent cation that binds near, but not in, the active site. The most likely occupant of the site in vivo is potassium. Ion binding induces a conformational change that may alter substrate affinity. Functionally, catalyzes the phosphorylation of ribose at O-5 in a reaction requiring ATP and magnesium. The resulting D-ribose-5-phosphate can then be used either for sythesis of nucleotides, histidine, and tryptophan, or as a component of the pentose phosphate pathway. The polypeptide is Ribokinase (Haemophilus influenzae (strain ATCC 51907 / DSM 11121 / KW20 / Rd)).